The chain runs to 464 residues: Soluble pyridine nucleotide transhydrogenase (464 aa).

Position 35–44 (35–44) interacts with FAD; that stretch reads DDRRQVGGNC.

It belongs to the class-I pyridine nucleotide-disulfide oxidoreductase family. It depends on FAD as a cofactor.

It is found in the cytoplasm. The enzyme catalyses NAD(+) + NADPH = NADH + NADP(+). In terms of biological role, conversion of NADPH, generated by peripheral catabolic pathways, to NADH, which can enter the respiratory chain for energy generation. The chain is Soluble pyridine nucleotide transhydrogenase from Pseudomonas putida (strain ATCC 47054 / DSM 6125 / CFBP 8728 / NCIMB 11950 / KT2440).